The chain runs to 326 residues: (+)-T-muurolol synthase ((2E,6E)-farnesyl diphosphate cyclizing) (326 aa).

Mg(2+) contacts are provided by aspartate 81 and aspartate 85. The DDXXD motif motif lies at 81–85 (DDQCD). Arginine 175 contributes to the substrate binding site. Residues asparagine 221 and serine 225 each contribute to the Mg(2+) site. Residue lysine 228 participates in substrate binding. Glutamate 229 is a Mg(2+) binding site. Residue 309–310 (RY) coordinates substrate.

The protein belongs to the terpene synthase family. Mg(2+) is required as a cofactor.

The catalysed reaction is (2E,6E)-farnesyl diphosphate + H2O = (+)-T-muurolol + diphosphate. It participates in secondary metabolite biosynthesis; terpenoid biosynthesis. Catalyzes the conversion of (2E,6E)-farnesyl diphosphate (FPP) into (+)-T-muurolol via a 1,10-cyclization, which requires isomerization of FPP to nerolidyl diphosphate (NPP) and then abstraction of the pyrophosphate from intermediate NPP leading to a (E,Z)-germacradienyl (helminthogermacradienyl) cation. The chain is (+)-T-muurolol synthase ((2E,6E)-farnesyl diphosphate cyclizing) from Roseiflexus castenholzii (strain DSM 13941 / HLO8).